Reading from the N-terminus, the 604-residue chain is Elongation factor 4 (604 aa).

The tr-type G domain occupies 10–191 (KNIRNFSIIA…KIITTIPAPS (182 aa)). Residues 22-27 (DHGKST) and 138-141 (NKID) each bind GTP.

It belongs to the TRAFAC class translation factor GTPase superfamily. Classic translation factor GTPase family. LepA subfamily.

The protein localises to the cell inner membrane. The enzyme catalyses GTP + H2O = GDP + phosphate + H(+). Its function is as follows. Required for accurate and efficient protein synthesis under certain stress conditions. May act as a fidelity factor of the translation reaction, by catalyzing a one-codon backward translocation of tRNAs on improperly translocated ribosomes. Back-translocation proceeds from a post-translocation (POST) complex to a pre-translocation (PRE) complex, thus giving elongation factor G a second chance to translocate the tRNAs correctly. Binds to ribosomes in a GTP-dependent manner. The chain is Elongation factor 4 from Helicobacter pylori (strain J99 / ATCC 700824) (Campylobacter pylori J99).